The following is a 169-amino-acid chain: Calfumirin-1 (169 aa).

EF-hand domains are found at residues 6 to 41 (NIVE…KKAF), 42 to 77 (NPER…DKAL), 93 to 128 (EVEE…TGAK), and 129 to 164 (DPEK…VQKL). D19, N21, D23, E25, E30, D55, D57, D59, K61, E66, D108, N110, D112, E117, D142, N144, D146, T148, and E153 together coordinate Ca(2+).

Its function is as follows. May be involved in the phase-shift of cells from growth to differentiation. The polypeptide is Calfumirin-1 (cafA) (Dictyostelium discoideum (Social amoeba)).